Reading from the N-terminus, the 366-residue chain is Chorismate synthase (366 aa).

The NADP(+) site is built by Arg48 and Arg54. Residues 125 to 127, 238 to 239, Gly278, 293 to 297, and Arg319 each bind FMN; these read RSS, NA, and KPTSS.

Belongs to the chorismate synthase family. Homotetramer. Requires FMNH2 as cofactor.

It catalyses the reaction 5-O-(1-carboxyvinyl)-3-phosphoshikimate = chorismate + phosphate. Its pathway is metabolic intermediate biosynthesis; chorismate biosynthesis; chorismate from D-erythrose 4-phosphate and phosphoenolpyruvate: step 7/7. Catalyzes the anti-1,4-elimination of the C-3 phosphate and the C-6 proR hydrogen from 5-enolpyruvylshikimate-3-phosphate (EPSP) to yield chorismate, which is the branch point compound that serves as the starting substrate for the three terminal pathways of aromatic amino acid biosynthesis. This reaction introduces a second double bond into the aromatic ring system. The chain is Chorismate synthase from Dechloromonas aromatica (strain RCB).